The sequence spans 100 residues: MAVKTGIAIGLNKGKKVTQMTPAPKISYKKGAASNRTKFVRSLVREIAGLSPYERRLIDLIRNSGEKRARKVAKKRLGSFTRAKAKVEEMNNIIAASRRH.

Belongs to the eukaryotic ribosomal protein eL36 family. Component of the large ribosomal subunit (LSU). Mature yeast ribosomes consist of a small (40S) and a large (60S) subunit. The 40S small subunit contains 1 molecule of ribosomal RNA (18S rRNA) and 33 different proteins (encoded by 57 genes). The large 60S subunit contains 3 rRNA molecules (25S, 5.8S and 5S rRNA) and 46 different proteins (encoded by 81 genes).

It is found in the cytoplasm. Functionally, component of the ribosome, a large ribonucleoprotein complex responsible for the synthesis of proteins in the cell. The small ribosomal subunit (SSU) binds messenger RNAs (mRNAs) and translates the encoded message by selecting cognate aminoacyl-transfer RNA (tRNA) molecules. The large subunit (LSU) contains the ribosomal catalytic site termed the peptidyl transferase center (PTC), which catalyzes the formation of peptide bonds, thereby polymerizing the amino acids delivered by tRNAs into a polypeptide chain. The nascent polypeptides leave the ribosome through a tunnel in the LSU and interact with protein factors that function in enzymatic processing, targeting, and the membrane insertion of nascent chains at the exit of the ribosomal tunnel. The protein is Large ribosomal subunit protein eL36B of Saccharomyces cerevisiae (strain ATCC 204508 / S288c) (Baker's yeast).